The primary structure comprises 331 residues: Glycerol-3-phosphate dehydrogenase [NAD(P)+] (331 aa).

NADPH-binding residues include serine 10, tryptophan 11, arginine 31, arginine 32, and lysine 105. Residues lysine 105 and glycine 135 each contribute to the sn-glycerol 3-phosphate site. Residue alanine 139 coordinates NADPH. Sn-glycerol 3-phosphate is bound by residues lysine 190, aspartate 243, serine 253, arginine 254, and asparagine 255. The active-site Proton acceptor is lysine 190. Position 254 (arginine 254) interacts with NADPH. NADPH-binding residues include valine 279 and glutamate 281.

This sequence belongs to the NAD-dependent glycerol-3-phosphate dehydrogenase family.

Its subcellular location is the cytoplasm. It carries out the reaction sn-glycerol 3-phosphate + NAD(+) = dihydroxyacetone phosphate + NADH + H(+). It catalyses the reaction sn-glycerol 3-phosphate + NADP(+) = dihydroxyacetone phosphate + NADPH + H(+). It functions in the pathway membrane lipid metabolism; glycerophospholipid metabolism. Its function is as follows. Catalyzes the reduction of the glycolytic intermediate dihydroxyacetone phosphate (DHAP) to sn-glycerol 3-phosphate (G3P), the key precursor for phospholipid synthesis. The protein is Glycerol-3-phosphate dehydrogenase [NAD(P)+] of Corynebacterium diphtheriae (strain ATCC 700971 / NCTC 13129 / Biotype gravis).